We begin with the raw amino-acid sequence, 309 residues long: Homoserine kinase (309 aa).

88 to 98 lines the ATP pocket; that stretch reads PLARGLGSSAA.

This sequence belongs to the GHMP kinase family. Homoserine kinase subfamily.

The protein resides in the cytoplasm. It catalyses the reaction L-homoserine + ATP = O-phospho-L-homoserine + ADP + H(+). It participates in amino-acid biosynthesis; L-threonine biosynthesis; L-threonine from L-aspartate: step 4/5. Its function is as follows. Catalyzes the ATP-dependent phosphorylation of L-homoserine to L-homoserine phosphate. This is Homoserine kinase from Halalkalibacterium halodurans (strain ATCC BAA-125 / DSM 18197 / FERM 7344 / JCM 9153 / C-125) (Bacillus halodurans).